The following is a 309-amino-acid chain: L-2-keto-3-deoxyarabonate dehydratase (309 aa).

The active-site Schiff-base intermediate with substrate is Lys-171.

This sequence belongs to the DapA family. As to quaternary structure, homodimer.

It carries out the reaction 2-dehydro-3-deoxy-L-arabinonate = 2,5-dioxopentanoate + H2O. Catalyzes the dehydration of L-2-keto-3-deoxyarabonate (L-KDA) to alpha-ketoglutaric semialdehyde (alphaKGSA). Is involved in a degradation pathway of L-arabinose that allows A.brasilense to grow on L-arabinose as a sole carbon source. This chain is L-2-keto-3-deoxyarabonate dehydratase (araD), found in Azospirillum brasilense.